Reading from the N-terminus, the 362-residue chain is Protein-glutamate methylesterase/protein-glutamine glutaminase (362 aa).

The Response regulatory domain occupies 5–122 (KVLCVDDSAL…RDGMLDYSEK (118 aa)). Asp-56 is subject to 4-aspartylphosphate. The 193-residue stretch at 163 to 355 (LLSTEKLIIV…RRVMARLSSM (193 aa)) folds into the CheB-type methylesterase domain. Active-site residues include Ser-175, His-201, and Asp-297.

Belongs to the CheB family. Phosphorylated by CheA. Phosphorylation of the N-terminal regulatory domain activates the methylesterase activity.

The protein localises to the cytoplasm. The catalysed reaction is [protein]-L-glutamate 5-O-methyl ester + H2O = L-glutamyl-[protein] + methanol + H(+). The enzyme catalyses L-glutaminyl-[protein] + H2O = L-glutamyl-[protein] + NH4(+). Its function is as follows. Involved in chemotaxis. Part of a chemotaxis signal transduction system that modulates chemotaxis in response to various stimuli. Catalyzes the demethylation of specific methylglutamate residues introduced into the chemoreceptors (methyl-accepting chemotaxis proteins or MCP) by CheR. Also mediates the irreversible deamidation of specific glutamine residues to glutamic acid. The protein is Protein-glutamate methylesterase/protein-glutamine glutaminase of Paraburkholderia xenovorans (strain LB400).